Consider the following 276-residue polypeptide: MSRLIIPSHSPNEEGNVVRVTPESVGWEYVGFEVYVLAKGQTLRKETKDQEACLVLLKGKANISTKLERWEQIGLRMDVFEKVPPYSVYVPANDVYEVEAMTDVEVAVCLAPGKGTYPARLIPPSEVGVEIRGAGNIERRVHNILPESQPADSLLVVEVFTPEGNWSSYPPHKHDQDNLPHESYLEETYYHKINPGHGFMVQRVYTDDRSIDETMVVKNGDVVLVPKGYHPVSAPPGYEGYYLNVMAGPVRTWKFHNDPDHDWVMESKLAAKQKEK.

This sequence belongs to the isomerase IolB family.

The catalysed reaction is 5-deoxy-D-glucuronate = 5-dehydro-2-deoxy-D-gluconate. It functions in the pathway polyol metabolism; myo-inositol degradation into acetyl-CoA; acetyl-CoA from myo-inositol: step 4/7. In terms of biological role, involved in the isomerization of 5-deoxy-glucuronate (5DG) to 5-dehydro-2-deoxy-D-gluconate (DKG or 2-deoxy-5-keto-D-gluconate). This chain is 5-deoxy-glucuronate isomerase, found in Geobacillus kaustophilus (strain HTA426).